A 273-amino-acid chain; its full sequence is Putative phosphoenolpyruvate synthase regulatory protein (273 aa).

An ADP-binding site is contributed by 154 to 161 (GVSRSGKT).

This sequence belongs to the pyruvate, phosphate/water dikinase regulatory protein family. PSRP subfamily.

The enzyme catalyses [pyruvate, water dikinase] + ADP = [pyruvate, water dikinase]-phosphate + AMP + H(+). It catalyses the reaction [pyruvate, water dikinase]-phosphate + phosphate + H(+) = [pyruvate, water dikinase] + diphosphate. In terms of biological role, bifunctional serine/threonine kinase and phosphorylase involved in the regulation of the phosphoenolpyruvate synthase (PEPS) by catalyzing its phosphorylation/dephosphorylation. This chain is Putative phosphoenolpyruvate synthase regulatory protein, found in Neisseria meningitidis serogroup C (strain 053442).